The following is a 350-amino-acid chain: Galactokinase (350 aa).

14–17 (EHTD) lines the substrate pocket. ATP-binding positions include serine 46 and 96-102 (GAGLSSS). Residues serine 102 and glutamate 134 each coordinate Mg(2+). Aspartate 146 acts as the Proton acceptor in catalysis. Tyrosine 196 contacts substrate.

It belongs to the GHMP kinase family. GalK subfamily.

It localises to the cytoplasm. The catalysed reaction is alpha-D-galactose + ATP = alpha-D-galactose 1-phosphate + ADP + H(+). The protein operates within carbohydrate metabolism; galactose metabolism. Catalyzes the transfer of the gamma-phosphate of ATP to D-galactose to form alpha-D-galactose-1-phosphate (Gal-1-P). The protein is Galactokinase of Thermotoga petrophila (strain ATCC BAA-488 / DSM 13995 / JCM 10881 / RKU-1).